The following is a 92-amino-acid chain: Large ribosomal subunit protein bL28 (92 aa).

It belongs to the bacterial ribosomal protein bL28 family.

This chain is Large ribosomal subunit protein bL28, found in Borrelia duttonii (strain Ly).